Reading from the N-terminus, the 237-residue chain is Ubiquinone biosynthesis O-methyltransferase (237 aa).

S-adenosyl-L-methionine contacts are provided by R38, G57, D78, and M122.

The protein belongs to the methyltransferase superfamily. UbiG/COQ3 family.

It carries out the reaction a 3-demethylubiquinol + S-adenosyl-L-methionine = a ubiquinol + S-adenosyl-L-homocysteine + H(+). The enzyme catalyses a 3-(all-trans-polyprenyl)benzene-1,2-diol + S-adenosyl-L-methionine = a 2-methoxy-6-(all-trans-polyprenyl)phenol + S-adenosyl-L-homocysteine + H(+). Its pathway is cofactor biosynthesis; ubiquinone biosynthesis. Its function is as follows. O-methyltransferase that catalyzes the 2 O-methylation steps in the ubiquinone biosynthetic pathway. This Methylococcus capsulatus (strain ATCC 33009 / NCIMB 11132 / Bath) protein is Ubiquinone biosynthesis O-methyltransferase.